The primary structure comprises 206 residues: Thymidylate kinase (206 aa).

An ATP-binding site is contributed by 10-17 (GNDGSGKS).

The protein belongs to the thymidylate kinase family.

It catalyses the reaction dTMP + ATP = dTDP + ADP. Its function is as follows. Phosphorylation of dTMP to form dTDP in both de novo and salvage pathways of dTTP synthesis. This is Thymidylate kinase from Caldicellulosiruptor saccharolyticus (strain ATCC 43494 / DSM 8903 / Tp8T 6331).